Reading from the N-terminus, the 483-residue chain is NADH-quinone oxidoreductase subunit N (483 aa).

13 helical membrane-spanning segments follow: residues 11–31 (ALPEIIILCMAMFVLLLDLFL), 37–57 (SLIYIFTQLGLAAAAVVTACT), 82–100 (LMMYLTTSVMLVYTRQYVS), 110–130 (FALTLFALLGMMIMVSGQHFL), 164–184 (FVLGALSSGMLLYGMSMLYGV), 205–225 (AVLVLGVVFLIAGLGFKLGAV), 239–259 (PTAVTLFIGSVTKLAAFAFMI), 268–288 (VLAIDWQGMLAIMAVLSILIG), 301–321 (MLAYSTISHVGYLLYGFMSAG), 329–349 (MFYIMAYVLMTLGGFGIMLLL), 372–392 (YAFLMLIIMFSMAGVPPTLGF), 406–426 (GFVGLVIFAVVMAAIGGFYYL), and 446–466 (PIDMKVLLSLNALLLLALGMF).

Belongs to the complex I subunit 2 family. NDH-1 is composed of 14 different subunits. Subunits NuoA, H, J, K, L, M, N constitute the membrane sector of the complex.

It localises to the cell inner membrane. The enzyme catalyses a quinone + NADH + 5 H(+)(in) = a quinol + NAD(+) + 4 H(+)(out). In terms of biological role, NDH-1 shuttles electrons from NADH, via FMN and iron-sulfur (Fe-S) centers, to quinones in the respiratory chain. The immediate electron acceptor for the enzyme in this species is believed to be ubiquinone. Couples the redox reaction to proton translocation (for every two electrons transferred, four hydrogen ions are translocated across the cytoplasmic membrane), and thus conserves the redox energy in a proton gradient. The protein is NADH-quinone oxidoreductase subunit N of Methylovorus glucosotrophus (strain SIP3-4).